We begin with the raw amino-acid sequence, 153 residues long: Lipoprotein signal peptidase (153 aa).

3 helical membrane passes run 7–27, 59–79, and 93–113; these read LIIISIFLIDFFTKKWILNNY, NLIRILIIVISIFILLFIFYM, and SIIIGGSFGNIFDRIFYGSVI. Active-site residues include D114 and D132. The helical transmembrane segment at 123–143 threads the bilayer; that stretch reads WHFPVFNFADISIFIGFLILI.

Belongs to the peptidase A8 family.

It is found in the cell membrane. It carries out the reaction Release of signal peptides from bacterial membrane prolipoproteins. Hydrolyzes -Xaa-Yaa-Zaa-|-(S,diacylglyceryl)Cys-, in which Xaa is hydrophobic (preferably Leu), and Yaa (Ala or Ser) and Zaa (Gly or Ala) have small, neutral side chains.. The protein operates within protein modification; lipoprotein biosynthesis (signal peptide cleavage). Its function is as follows. This protein specifically catalyzes the removal of signal peptides from prolipoproteins. This is Lipoprotein signal peptidase from Wigglesworthia glossinidia brevipalpis.